A 362-amino-acid polypeptide reads, in one-letter code: Putative sphingolipid delta(4)-desaturase/C4-monooxygenase (362 aa).

The next 3 helical transmembrane spans lie at 45 to 61, 71 to 91, and 107 to 127; these read YVVS…CWLL, LEAY…IHDI, and FFGM…FKKY. The Histidine box-1 motif lies at 89–93; sequence HDISH. Residues 128–132 carry the Histidine box-2 motif; the sequence is HVEHH. 2 helical membrane passes run 160–177 and 198–218; these read LLWL…PLII and LLIL…GTII. The short motif at 259–263 is the Histidine box-3 element; sequence HVEHH.

Belongs to the fatty acid desaturase type 1 family. DEGS subfamily.

The protein resides in the membrane. It catalyses the reaction an N-acyl-15-methylhexadecasphinganine + 2 Fe(II)-[cytochrome b5] + O2 + 2 H(+) = an N-acyl-4-hydroxy-15-methylhexadecasphinganine + 2 Fe(III)-[cytochrome b5] + H2O. It carries out the reaction an N-acyl-15-methylhexadecasphinganine + 2 Fe(II)-[cytochrome b5] + O2 + 2 H(+) = an N-acyl-15-methylhexadecasphing-4-enine + 2 Fe(III)-[cytochrome b5] + 2 H2O. The catalysed reaction is a dihydroceramide + 2 Fe(II)-[cytochrome b5] + O2 + 2 H(+) = a phytoceramide + 2 Fe(III)-[cytochrome b5] + H2O. The enzyme catalyses an N-acylsphinganine + 2 Fe(II)-[cytochrome b5] + O2 + 2 H(+) = an N-acylsphing-4-enine + 2 Fe(III)-[cytochrome b5] + 2 H2O. It catalyses the reaction N-octanoylsphinganine + 2 Fe(II)-[cytochrome b5] + O2 + 2 H(+) = N-octanoyl-4-hydroxysphinganine + 2 Fe(III)-[cytochrome b5] + H2O. It carries out the reaction an N-acylsphinganine + 2 Fe(II)-[cytochrome b5] + O2 + 2 H(+) = an N-acyl-(4R)-4-hydroxysphinganine + 2 Fe(III)-[cytochrome b5] + H2O. The protein operates within lipid metabolism; sphingolipid metabolism. Its function is as follows. Bifunctional enzyme which acts both as a sphingolipid delta(4)-desaturase and a sphingolipid C4-monooxygenase. C.elegans contain specific sphingoid bases, which are unique or different in structure compared to the sphingoid bases found in other animals. Two examples of these distinctive compounds are: 15-methylhexadecasphinganine and 15-methylhexadecasphing-4-enine and this enzyme can catalyze their conversion. The sequence is that of Putative sphingolipid delta(4)-desaturase/C4-monooxygenase (ttm-5) from Caenorhabditis elegans.